The primary structure comprises 550 residues: Chaperonin GroEL (550 aa).

ATP-binding positions include T30–P33, K51, D87–T91, G415, N478–A480, and D494.

It belongs to the chaperonin (HSP60) family. Forms a cylinder of 14 subunits composed of two heptameric rings stacked back-to-back. Interacts with the co-chaperonin GroES.

It localises to the cytoplasm. The catalysed reaction is ATP + H2O + a folded polypeptide = ADP + phosphate + an unfolded polypeptide.. Its function is as follows. Together with its co-chaperonin GroES, plays an essential role in assisting protein folding. The GroEL-GroES system forms a nano-cage that allows encapsulation of the non-native substrate proteins and provides a physical environment optimized to promote and accelerate protein folding. The polypeptide is Chaperonin GroEL (Desulfosudis oleivorans (strain DSM 6200 / JCM 39069 / Hxd3) (Desulfococcus oleovorans)).